The chain runs to 608 residues: Alpha-glycerophosphate oxidase (608 aa).

21–49 (DLLIIGGGITGAGVALQAAASGLETGLIE) is an FAD binding site. A disordered region spans residues 393–418 (SAVSKLESSTSEKHLDPSAVSRGSSL).

Belongs to the FAD-dependent glycerol-3-phosphate dehydrogenase family. FAD is required as a cofactor.

The protein resides in the cell membrane. The enzyme catalyses sn-glycerol 3-phosphate + O2 = dihydroxyacetone phosphate + H2O2. The protein operates within membrane lipid metabolism; glycerophospholipid metabolism. In Streptococcus pneumoniae serotype 4 (strain ATCC BAA-334 / TIGR4), this protein is Alpha-glycerophosphate oxidase (glpO).